The chain runs to 341 residues: Biotin synthase (341 aa).

The region spanning 40–267 (AEIQVSTLLS…RSMVRLSAGR (228 aa)) is the Radical SAM core domain. [4Fe-4S] cluster-binding residues include cysteine 55, cysteine 59, and cysteine 62. The [2Fe-2S] cluster site is built by cysteine 99, cysteine 130, cysteine 190, and arginine 262.

This sequence belongs to the radical SAM superfamily. Biotin synthase family. As to quaternary structure, homodimer. The cofactor is [4Fe-4S] cluster. [2Fe-2S] cluster is required as a cofactor.

The enzyme catalyses (4R,5S)-dethiobiotin + (sulfur carrier)-SH + 2 reduced [2Fe-2S]-[ferredoxin] + 2 S-adenosyl-L-methionine = (sulfur carrier)-H + biotin + 2 5'-deoxyadenosine + 2 L-methionine + 2 oxidized [2Fe-2S]-[ferredoxin]. It participates in cofactor biosynthesis; biotin biosynthesis; biotin from 7,8-diaminononanoate: step 2/2. Its function is as follows. Catalyzes the conversion of dethiobiotin (DTB) to biotin by the insertion of a sulfur atom into dethiobiotin via a radical-based mechanism. The chain is Biotin synthase from Xylella fastidiosa (strain 9a5c).